Consider the following 744-residue polypeptide: Phosphoribosylformylglycinamidine synthase subunit PurL (744 aa).

His49 is a catalytic residue. Tyr52 and Lys91 together coordinate ATP. Residue Glu93 coordinates Mg(2+). Substrate-binding positions include 94 to 97 and Arg116; that span reads SHNH. The Proton acceptor role is filled by His95. Asp117 serves as a coordination point for Mg(2+). Position 240 (Gln240) interacts with substrate. Asp268 serves as a coordination point for Mg(2+). 312–314 is a substrate binding site; the sequence is ESQ. ATP-binding residues include Asp493 and Gly530. Position 531 (Asn531) interacts with Mg(2+). Residue Ser533 coordinates substrate.

This sequence belongs to the FGAMS family. In terms of assembly, monomer. Part of the FGAM synthase complex composed of 1 PurL, 1 PurQ and 2 PurS subunits.

The protein resides in the cytoplasm. It catalyses the reaction N(2)-formyl-N(1)-(5-phospho-beta-D-ribosyl)glycinamide + L-glutamine + ATP + H2O = 2-formamido-N(1)-(5-O-phospho-beta-D-ribosyl)acetamidine + L-glutamate + ADP + phosphate + H(+). The protein operates within purine metabolism; IMP biosynthesis via de novo pathway; 5-amino-1-(5-phospho-D-ribosyl)imidazole from N(2)-formyl-N(1)-(5-phospho-D-ribosyl)glycinamide: step 1/2. Part of the phosphoribosylformylglycinamidine synthase complex involved in the purines biosynthetic pathway. Catalyzes the ATP-dependent conversion of formylglycinamide ribonucleotide (FGAR) and glutamine to yield formylglycinamidine ribonucleotide (FGAM) and glutamate. The FGAM synthase complex is composed of three subunits. PurQ produces an ammonia molecule by converting glutamine to glutamate. PurL transfers the ammonia molecule to FGAR to form FGAM in an ATP-dependent manner. PurS interacts with PurQ and PurL and is thought to assist in the transfer of the ammonia molecule from PurQ to PurL. The chain is Phosphoribosylformylglycinamidine synthase subunit PurL from Nitrobacter hamburgensis (strain DSM 10229 / NCIMB 13809 / X14).